The primary structure comprises 776 residues: Photosystem I P700 chlorophyll a apoprotein A1 (776 aa).

8 consecutive transmembrane segments (helical) span residues 76–99, 162–185, 201–225, 309–327, 368–391, 407–433, 455–477, and 557–575; these read IFSAHFGHLAIVFIWLSGAFFHGA, LMALATGALIMAGLVLHGGIFHYH, LQHHQIGLFGLGSLGWTGHLIHVAN, VAHHHLAWAVFLMFGGHVY, WHAQLAVNLACIGSGSIVVAHHMY, LGLFTHHMWIGGLMICGAAAHAGIAVI, AIISHLNWVCMFLGFHSFGLYIH, and LMIHHIHAFTIHVTCLILL. Residues cysteine 599 and cysteine 608 each coordinate [4Fe-4S] cluster. The next 2 membrane-spanning stretches (helical) occupy residues 615 to 636 and 690 to 712; these read HVFLGLFWMYNSLSMVIFYFSW and LSGYGLLFLGGHFVWAFSLMFLF. Histidine 701 lines the divinylchlorophyll a' pocket. 2 residues coordinate divinyl chlorophyll a: methionine 709 and tyrosine 717. A phylloquinone-binding site is contributed by tryptophan 718. The helical transmembrane segment at 750–770 threads the bilayer; sequence AVGVTHFLFGGIVTTWAFFHA.

This sequence belongs to the PsaA/PsaB family. In terms of assembly, the PsaA/B heterodimer binds the P700 divinyl chlorophyll special pair and subsequent electron acceptors. PSI consists of a core antenna complex that captures photons, and an electron transfer chain that converts photonic excitation into a charge separation. The cyanobacterial PSI reaction center is composed of one copy each of PsaA,B,C,D,E,F,I,J,K,L,M and X, and forms trimeric complexes. It depends on PSI electron transfer chain: 5 divinyl chlorophyll a, 1 divinyl chlorophyll a', 2 phylloquinones and 3 4Fe-4S clusters. PSI core antenna: 90 divinyl chlorophyll a, 22 carotenoids, 3 phospholipids and 1 galactolipid. P700 is a divinyl chlorophyll a/divinyl chlorophyll a' dimer, A0 is one or more divinyl chlorophyll a, A1 is one or both phylloquinones and FX is a shared 4Fe-4S iron-sulfur center. as a cofactor.

The protein resides in the cellular thylakoid membrane. It catalyses the reaction reduced [plastocyanin] + hnu + oxidized [2Fe-2S]-[ferredoxin] = oxidized [plastocyanin] + reduced [2Fe-2S]-[ferredoxin]. In terms of biological role, psaA and PsaB bind P700, the primary electron donor of photosystem I (PSI), as well as the electron acceptors A0, A1 and FX. PSI is a plastocyanin/cytochrome c6-ferredoxin oxidoreductase, converting photonic excitation into a charge separation, which transfers an electron from the donor P700 chlorophyll pair to the spectroscopically characterized acceptors A0, A1, FX, FA and FB in turn. Oxidized P700 is reduced on the lumenal side of the thylakoid membrane by plastocyanin or cytochrome c6. In Prochlorococcus marinus (strain MIT 9303), this protein is Photosystem I P700 chlorophyll a apoprotein A1.